The following is a 268-amino-acid chain: Proliferating cell nuclear antigen (268 aa).

The DNA-binding element occupies 61–80; the sequence is RCDRNPSMGMNLNNMAKMLK.

This sequence belongs to the PCNA family.

The protein resides in the nucleus. Its function is as follows. This protein is an auxiliary protein of DNA polymerase delta and is involved in the control of eukaryotic DNA replication by increasing the polymerase's processibility during elongation of the leading strand. This is Proliferating cell nuclear antigen from Catharanthus roseus (Madagascar periwinkle).